Here is a 315-residue protein sequence, read N- to C-terminus: Archaeosortase A (315 aa).

Helical transmembrane passes span 12 to 32 (VIPY…AGVA), 47 to 67 (AGAW…FAFV), 74 to 94 (TVLI…VFAG), 173 to 193 (VVFE…IAAV), 204 to 224 (IALS…FIAL), 227 to 247 (GYQW…FGLT), and 260 to 280 (VLAQ…IARW). The Acyl-thioester intermediate role is filled by cysteine 177. Catalysis depends on arginine 218, which acts as the Proton donor.

Belongs to the exosortase/archaeosortase family. Archaeosortase A subfamily.

Its subcellular location is the cell membrane. Its function is as follows. Transpeptidase that recognizes and modifies its substrate by proteolytic cleavage of a sorting signal. Following cleavage, a covalent intermediate is formed via a thioester bond between the archaeosortase and its substrate, which is then transferred and covalently attached to the cell membrane. This Natronomonas pharaonis (strain ATCC 35678 / DSM 2160 / CIP 103997 / JCM 8858 / NBRC 14720 / NCIMB 2260 / Gabara) (Halobacterium pharaonis) protein is Archaeosortase A.